We begin with the raw amino-acid sequence, 364 residues long: MSYREVSRVLIMAGGTGGHVVPALSLARALRARGVSVEWLGSPRGIENRLVPAADIVLHRIQVAGLRGNGMAGWLLAPWRLAKAVWQARQVIAKFDPQLVVGLGGFASGPGGLAAWLMRRRLIVHEQNAVAGMTNRYLSRLADGVYAAFPGAFGAHRAEVVGNPVRDDIAALGETPRGSDALRQRPLRLLVLGGSLGAQALNTQVPQALARLPAAQRPDVRHQAGRDKETATQSVYAEAGVEAEVSAFIDDMAAAYDWADLIVCRAGALTIAELAAAAKPSILVPFPHAVDDHQTLNARQLVDAGAARLMPQTQLTAESLAETLATLLEPETLATMATSARAQARLDAVERLVAGCMEANRDSQ.

UDP-N-acetyl-alpha-D-glucosamine is bound by residues 16–18 (TGG), asparagine 128, arginine 166, serine 195, isoleucine 249, and glutamine 294.

It belongs to the glycosyltransferase 28 family. MurG subfamily.

The protein resides in the cell inner membrane. The enzyme catalyses di-trans,octa-cis-undecaprenyl diphospho-N-acetyl-alpha-D-muramoyl-L-alanyl-D-glutamyl-meso-2,6-diaminopimeloyl-D-alanyl-D-alanine + UDP-N-acetyl-alpha-D-glucosamine = di-trans,octa-cis-undecaprenyl diphospho-[N-acetyl-alpha-D-glucosaminyl-(1-&gt;4)]-N-acetyl-alpha-D-muramoyl-L-alanyl-D-glutamyl-meso-2,6-diaminopimeloyl-D-alanyl-D-alanine + UDP + H(+). It functions in the pathway cell wall biogenesis; peptidoglycan biosynthesis. Functionally, cell wall formation. Catalyzes the transfer of a GlcNAc subunit on undecaprenyl-pyrophosphoryl-MurNAc-pentapeptide (lipid intermediate I) to form undecaprenyl-pyrophosphoryl-MurNAc-(pentapeptide)GlcNAc (lipid intermediate II). In Chromohalobacter salexigens (strain ATCC BAA-138 / DSM 3043 / CIP 106854 / NCIMB 13768 / 1H11), this protein is UDP-N-acetylglucosamine--N-acetylmuramyl-(pentapeptide) pyrophosphoryl-undecaprenol N-acetylglucosamine transferase.